A 254-amino-acid chain; its full sequence is 4-hydroxy-tetrahydrodipicolinate reductase (254 aa).

Residues 8-13, Asp-35, 86-88, and 110-113 contribute to the NAD(+) site; these read GCSGKM, CST, and SANM. The active-site Proton donor/acceptor is the His-143. His-144 is a (S)-2,3,4,5-tetrahydrodipicolinate binding site. Lys-147 acts as the Proton donor in catalysis. 153–154 is a (S)-2,3,4,5-tetrahydrodipicolinate binding site; the sequence is GT.

Belongs to the DapB family.

The protein localises to the cytoplasm. It carries out the reaction (S)-2,3,4,5-tetrahydrodipicolinate + NAD(+) + H2O = (2S,4S)-4-hydroxy-2,3,4,5-tetrahydrodipicolinate + NADH + H(+). It catalyses the reaction (S)-2,3,4,5-tetrahydrodipicolinate + NADP(+) + H2O = (2S,4S)-4-hydroxy-2,3,4,5-tetrahydrodipicolinate + NADPH + H(+). The protein operates within amino-acid biosynthesis; L-lysine biosynthesis via DAP pathway; (S)-tetrahydrodipicolinate from L-aspartate: step 4/4. Functionally, catalyzes the conversion of 4-hydroxy-tetrahydrodipicolinate (HTPA) to tetrahydrodipicolinate. This Clostridium perfringens (strain 13 / Type A) protein is 4-hydroxy-tetrahydrodipicolinate reductase.